The primary structure comprises 515 residues: Serine--tRNA ligase, cytoplasmic (515 aa).

The segment at 9-61 (RTDKGGDPEIIRETQRKRFKDVSLVDKLVQADTEWRKCRFTADNLNKAKNLCS) is interaction with tRNA. Positions 271 and 302 each coordinate L-serine. Residues 302–304 (RQE) and 318–321 (VHQF) contribute to the ATP site. E325 is an L-serine binding site. 391–394 (ELVS) lines the ATP pocket. An L-serine-binding site is contributed by N427. Residues 475 to 515 (PIDQETTKKQKKQQEGGKKKKHQGGDADLENKVENMSVNDS) form a disordered region. Residues 479–507 (ETTKKQKKQQEGGKKKKHQGGDADLENKV) are compositionally biased toward basic and acidic residues. Positions 482-494 (KKQKKQQEGGKKK) match the Nuclear localization signal motif.

The protein belongs to the class-II aminoacyl-tRNA synthetase family. Type-1 seryl-tRNA synthetase subfamily.

It is found in the cytoplasm. It localises to the nucleus. The catalysed reaction is tRNA(Ser) + L-serine + ATP = L-seryl-tRNA(Ser) + AMP + diphosphate + H(+). It catalyses the reaction tRNA(Sec) + L-serine + ATP = L-seryl-tRNA(Sec) + AMP + diphosphate + H(+). Its function is as follows. Catalyzes the attachment of serine to tRNA(Ser) in a two-step reaction: serine is first activated by ATP to form Ser-AMP and then transferred to the acceptor end of tRNA(Ser). Is probably also able to aminoacylate tRNA(Sec) with serine, to form the misacylated tRNA L-seryl-tRNA(Sec), which will be further converted into selenocysteinyl-tRNA(Sec). In the nucleus, binds to the vegfa core promoter and prevents myc binding and transcriptional activation by myc. Thereby inhibits the production of vegfa and sprouting angiogenesis mediated by vegfa. The chain is Serine--tRNA ligase, cytoplasmic (sars1) from Danio rerio (Zebrafish).